Reading from the N-terminus, the 138-residue chain is Basic phospholipase A2 Tpu-G6D49 (138 aa).

The first 16 residues, 1–16 (MRTLWIMAVLLVGVEG), serve as a signal peptide directing secretion. Cystine bridges form between Cys42/Cys131, Cys44/Cys60, Cys59/Cys111, Cys65/Cys138, Cys66/Cys104, Cys73/Cys97, and Cys91/Cys102. Residues Tyr43, Gly45, and Gly47 each contribute to the Ca(2+) site. The active site involves His63. Asp64 lines the Ca(2+) pocket. Residue Asp105 is part of the active site.

In terms of assembly, monomer. The cofactor is Ca(2+). In terms of tissue distribution, expressed by the venom gland.

It is found in the secreted. The enzyme catalyses a 1,2-diacyl-sn-glycero-3-phosphocholine + H2O = a 1-acyl-sn-glycero-3-phosphocholine + a fatty acid + H(+). Functionally, snake venom phospholipase A2 (PLA2) that impairs hemostasis. It weakly inhibits ADP-induced platelet aggregation when tested on platelet rich plasma from human and rabbit blood (15-25% of inhibition at 5-10 ug of enzyme), and dose-dependently inhibits blood coagulation, possibly by inhibiting thrombin activation. Also induces local edema a few hours after injection in the hind foot. Exhibits high hydrolytic activities toward L-dipalmitoyl phosphatidylcholine. PLA2 catalyzes the calcium-dependent hydrolysis of the 2-acyl groups in 3-sn-phosphoglycerides. The polypeptide is Basic phospholipase A2 Tpu-G6D49 (Craspedocephalus puniceus (Flat-nosed pitviper)).